Reading from the N-terminus, the 93-residue chain is Small ribosomal subunit protein uS19 (93 aa).

This sequence belongs to the universal ribosomal protein uS19 family.

Its function is as follows. Protein S19 forms a complex with S13 that binds strongly to the 16S ribosomal RNA. The chain is Small ribosomal subunit protein uS19 from Kocuria rhizophila (strain ATCC 9341 / DSM 348 / NBRC 103217 / DC2201).